The primary structure comprises 356 residues: MIDKLQAIEDRYVDLSQKISDPNIISNVAEWRKYVKEHAAIEDIVLKYREYKKVLEDIEATKELLSSNDEELKEMAEEELSQLEEKKEKLLEEIKILLIPKDPNDEKNVIMEIRAGAGGEEAALFAHDLFRMYSMYAEKKGWKVEIMSSNETDIGGFKEVILNISGKGSYSRLKYESGVHRVQRVPTTEAGGRIHTSTATVAVLPEVEEVDVEINPNDIKIDVFRSGGHGGQSVNTTDSAVRVTHIPTGIVVTCQDERSQIQNRERALKILRAKLYEMALQEQQREIAETRKSQVGTGERSERIRTYNFPQGRVTDHRIGLTLYRLQEVLDGDLDEIIDALILNDQAEKLKNMNLN.

Glutamine 232 carries the post-translational modification N5-methylglutamine.

Belongs to the prokaryotic/mitochondrial release factor family. In terms of processing, methylated by PrmC. Methylation increases the termination efficiency of RF1.

It is found in the cytoplasm. In terms of biological role, peptide chain release factor 1 directs the termination of translation in response to the peptide chain termination codons UAG and UAA. This is Peptide chain release factor 1 from Thermoanaerobacter pseudethanolicus (strain ATCC 33223 / 39E) (Clostridium thermohydrosulfuricum).